The sequence spans 168 residues: Small ribosomal subunit protein uS5 (168 aa).

Residues 17–80 enclose the S5 DRBM domain; it reads IEDQLVAVNR…EDGKKKMINV (64 aa).

The protein belongs to the universal ribosomal protein uS5 family. As to quaternary structure, part of the 30S ribosomal subunit. Contacts proteins S4 and S8.

Functionally, with S4 and S12 plays an important role in translational accuracy. Its function is as follows. Located at the back of the 30S subunit body where it stabilizes the conformation of the head with respect to the body. This Lactobacillus acidophilus (strain ATCC 700396 / NCK56 / N2 / NCFM) protein is Small ribosomal subunit protein uS5.